The sequence spans 90 residues: Small regulatory polypeptide of amino acid response (90 aa).

The Lumenal portion of the chain corresponds to 1–18; sequence MGAKAPRGPKVAQWAMET. A helical membrane pass occupies residues 19-39; it reads AVIGVVVVLFVVTVAITCVLC. Over 40 to 90 the chain is Cytoplasmic; it reads CFSCDSRAQDPQGGPGRSFTVATFRQEASLFTGPVRHAQPVPSAQDFWTFM.

Interacts with components of the lysosomal V-ATPase complex. Interacts with ATP6V0A1. Interacts with ATP6V0A2. Highly expressed in lung, heart and skeletal muscle.

It localises to the late endosome membrane. It is found in the lysosome membrane. Negative regulator of amino acid sensing and mTORC1, a signaling complex promoting cell growth in response to growth factors, energy levels and amino acids. Negatively regulates mTORC1 activation by inhibiting recruitment of mTORC1 to lysosomes upon stimulation with amino acids: acts by promoting the formation of a tightly bound supercomplex composed of the lysosomal V-ATPase, Ragulator and Rag GTPases, preventing recruitment of mTORC1. Acts as a regulator of muscle regeneration following injury by regulating mTORC1 activation. This Homo sapiens (Human) protein is Small regulatory polypeptide of amino acid response.